The following is a 517-amino-acid chain: Transmembrane protein 180 (517 aa).

Over 1–11 (MRLGGPWAWLL) the chain is Extracellular. Residues 12 to 43 (GLPTAVVYGSLALFVSVLHNVFLLYYVDTFVS) form a helical membrane-spanning segment. Topologically, residues 44 to 55 (VYKIDKAAFWVG) are cytoplasmic. Residues 56-74 (ETVFLLWNSLNDPLFGWLS) form a helical membrane-spanning segment. Over 75–100 (DRQFLSSQPRSGAGLSSRAVVLARVR) the chain is Extracellular. The chain crosses the membrane as a helical span at residues 101–118 (ALGWHGPLLALSFLAFWV). At 119–126 (PWAPAGLQ) the chain is on the cytoplasmic side. A helical transmembrane segment spans residues 127–151 (FLLCLCLYDGFLTLVDLHHHALLAD). Over 152–155 (LALS) the chain is Extracellular. The helical transmembrane segment at 156–179 (AHDRTHLNFYCSLFSAAGSLSVFA) threads the bilayer. Residues 180-191 (SYAFWNKEDFSS) are Cytoplasmic-facing. Residues 192-223 (FRAFCLALATGSGLGFVGAARLLRRRVEAAGR) traverse the membrane as a helical segment. Residues 224–264 (EPGCPAMAVNDGLCEEELLVGGEEAGSITLGQYLQQLARHR) lie on the Extracellular side of the membrane. A helical membrane pass occupies residues 265-292 (NFLWFVGMDLVQVFHCHFNSNFFPLFLE). Over 293–305 (HLLSDHISLSTGS) the chain is Cytoplasmic. The chain crosses the membrane as a helical span at residues 306-325 (FLLGISYVAPHLNNLYFLPL). The Extracellular segment spans residues 326-330 (CRRWG). Residues 331-350 (VYAVVRGLFLLKLGLSLLML) traverse the membrane as a helical segment. Over 351 to 358 (LAGPDHPG) the chain is Cytoplasmic. The chain crosses the membrane as a helical span at residues 359–393 (LLCLFIASNRVFTEGTCKLLTLVVTDLVDEDLVLN). The Extracellular portion of the chain corresponds to 394-402 (HRKQAASAL). A helical transmembrane segment spans residues 403 to 429 (LFGMVALVTKPGQTFAPLLGTWLLCFY). The Cytoplasmic portion of the chain corresponds to 430 to 466 (TGHDLFQQHPPAPVGSAQPWPEPPAPPPAQAPPLRQG). A helical membrane pass occupies residues 467-485 (CFYLLVLVPIACALLQLFT). Residues 486–517 (WSQFTLHGRRLHMVKAQRQSLSRAQTLDVKMV) lie on the Extracellular side of the membrane.

It localises to the cell membrane. This Bos taurus (Bovine) protein is Transmembrane protein 180.